The following is a 397-amino-acid chain: Argininosuccinate synthase (397 aa).

An ATP-binding site is contributed by 8-16 (AYSGGLDTS). Residues Y86 and S91 each coordinate L-citrulline. G116 lines the ATP pocket. Residues T118, N122, and D123 each contribute to the L-aspartate site. N122 is an L-citrulline binding site. The L-citrulline site is built by R126, S175, S184, E260, and Y272.

The protein belongs to the argininosuccinate synthase family. Type 1 subfamily. Homotetramer.

Its subcellular location is the cytoplasm. The catalysed reaction is L-citrulline + L-aspartate + ATP = 2-(N(omega)-L-arginino)succinate + AMP + diphosphate + H(+). Its pathway is amino-acid biosynthesis; L-arginine biosynthesis; L-arginine from L-ornithine and carbamoyl phosphate: step 2/3. This Clostridium botulinum (strain Kyoto / Type A2) protein is Argininosuccinate synthase.